The following is a 342-amino-acid chain: Phosphate acyltransferase (342 aa).

This sequence belongs to the PlsX family. In terms of assembly, homodimer. Probably interacts with PlsY.

It is found in the cytoplasm. The catalysed reaction is a fatty acyl-[ACP] + phosphate = an acyl phosphate + holo-[ACP]. It functions in the pathway lipid metabolism; phospholipid metabolism. Catalyzes the reversible formation of acyl-phosphate (acyl-PO(4)) from acyl-[acyl-carrier-protein] (acyl-ACP). This enzyme utilizes acyl-ACP as fatty acyl donor, but not acyl-CoA. The chain is Phosphate acyltransferase from Shewanella putrefaciens (strain CN-32 / ATCC BAA-453).